A 266-amino-acid polypeptide reads, in one-letter code: Glucosamine-6-phosphate deaminase (266 aa).

Aspartate 72 (proton acceptor; for enolization step) is an active-site residue. Catalysis depends on aspartate 141, which acts as the For ring-opening step. The Proton acceptor; for ring-opening step role is filled by histidine 143. Residue glutamate 148 is the For ring-opening step of the active site.

This sequence belongs to the glucosamine/galactosamine-6-phosphate isomerase family. NagB subfamily. In terms of assembly, homohexamer.

It carries out the reaction alpha-D-glucosamine 6-phosphate + H2O = beta-D-fructose 6-phosphate + NH4(+). It participates in amino-sugar metabolism; N-acetylneuraminate degradation; D-fructose 6-phosphate from N-acetylneuraminate: step 5/5. Allosterically activated by N-acetylglucosamine 6-phosphate (GlcNAc6P). In terms of biological role, catalyzes the reversible isomerization-deamination of glucosamine 6-phosphate (GlcN6P) to form fructose 6-phosphate (Fru6P) and ammonium ion. This Vibrio campbellii (strain ATCC BAA-1116) protein is Glucosamine-6-phosphate deaminase.